The sequence spans 147 residues: Prefoldin subunit alpha (147 aa).

The protein belongs to the prefoldin alpha subunit family. Heterohexamer of two alpha and four beta subunits.

Its subcellular location is the cytoplasm. In terms of biological role, molecular chaperone capable of stabilizing a range of proteins. Seems to fulfill an ATP-independent, HSP70-like function in archaeal de novo protein folding. The chain is Prefoldin subunit alpha from Saccharolobus islandicus (strain L.S.2.15 / Lassen #1) (Sulfolobus islandicus).